Consider the following 200-residue polypeptide: Nascent polypeptide-associated complex subunit alpha (200 aa).

The segment covering 1-19 has biased composition (basic and acidic residues); it reads MADPRIEELPDEETKKPTV. Disordered stretches follow at residues 1 to 52 and 120 to 165; these read MADP…SRNE and QQLA…EDKD. Residues 20–34 show a composition bias toward acidic residues; that stretch reads EELDESSDEESDAEA. In terms of domain architecture, NAC-A/B spans 49-114; it reads SRNEKKARKA…AKIEDLNASA (66 aa). The segment covering 127 to 143 has biased composition (basic and acidic residues); sequence AEHDHAGHTHDHKHEAA. The span at 144–160 shows a compositional bias: acidic residues; the sequence is KEEEEEEDDGEEVDAEG. One can recognise a UBA domain in the interval 161–200; it reads IEDKDIELVMTQANVSRKKAIKALKENDNDIVNSIMALSV.

It belongs to the NAC-alpha family. In terms of assembly, part of the nascent polypeptide-associated complex (NAC), consisting of EGD2 and EGD1. NAC associates with ribosomes via EGD1.

Its subcellular location is the cytoplasm. It localises to the nucleus. Its function is as follows. Component of the nascent polypeptide-associated complex (NAC), a dynamic component of the ribosomal exit tunnel, protecting the emerging polypeptides from interaction with other cytoplasmic proteins to ensure appropriate nascent protein targeting. The NAC complex also promotes mitochondrial protein import by enhancing productive ribosome interactions with the outer mitochondrial membrane and blocks the inappropriate interaction of ribosomes translating non-secretory nascent polypeptides with translocation sites in the membrane of the endoplasmic reticulum. EGD2 may also be involved in transcription regulation. This Chaetomium globosum (strain ATCC 6205 / CBS 148.51 / DSM 1962 / NBRC 6347 / NRRL 1970) (Soil fungus) protein is Nascent polypeptide-associated complex subunit alpha (EGD2).